We begin with the raw amino-acid sequence, 2555 residues long: Neurogenic locus notch homolog protein 1 (2555 aa).

Positions 1-18 (MPPLLAPLLCLALLPALA) are cleaved as a signal peptide. Residues 19–1735 (ARGPRCSQPG…VEPPPPAQLH (1717 aa)) are Extracellular-facing. EGF-like domains lie at 20 to 58 (RGPR…PRCQ), 59 to 99 (DPNP…PLCL), 102 to 139 (LDNA…KSCQ), and 140 to 176 (QADP…PTCR). Intrachain disulfides connect Cys-24–Cys-37, Cys-31–Cys-46, Cys-48–Cys-57, Cys-63–Cys-74, Cys-68–Cys-87, Cys-89–Cys-98, Cys-106–Cys-117, Cys-111–Cys-127, Cys-129–Cys-138, Cys-144–Cys-155, Cys-149–Cys-164, Cys-166–Cys-175, Cys-182–Cys-195, Cys-189–Cys-204, Cys-206–Cys-215, Cys-222–Cys-233, Cys-227–Cys-243, Cys-245–Cys-254, Cys-261–Cys-272, Cys-266–Cys-281, Cys-283–Cys-292, Cys-299–Cys-312, Cys-306–Cys-321, Cys-323–Cys-332, Cys-339–Cys-350, Cys-344–Cys-359, Cys-361–Cys-370, Cys-376–Cys-387, Cys-381–Cys-398, Cys-400–Cys-409, Cys-416–Cys-429, Cys-423–Cys-438, and Cys-440–Cys-449. Asn-41 is a glycosylation site (N-linked (GlcNAc...) asparagine). O-linked (Glc...) serine glycosylation occurs at Ser-65. The O-linked (Fuc...) threonine glycan is linked to Thr-73. O-linked (Fuc...) threonine glycosylation occurs at Thr-116. A glycan (O-linked (Glc...) serine) is linked at Ser-146. The EGF-like 5; calcium-binding domain maps to 178-216 (DVNECGQKPGLCRHGGTCHNEVGSYRCVCRATHTGPNCE). Thr-194 carries an O-linked (Fuc...) threonine glycan. Residues 218–255 (PYVPCSPSPCQNGGTCRPTGDVTHECACLPGFTGQNCE) form the EGF-like 6 domain. Residue Thr-232 is glycosylated (O-linked (Fuc...) threonine; alternate). Thr-232 is a glycosylation site (O-linked (GalNAc...) threonine; alternate). The EGF-like 7; calcium-binding domain occupies 257–293 (NIDDCPGNNCKNGGACVDGVNTYNCRCPPEWTGQYCT). The region spanning 295 to 333 (DVDECQLMPNACQNGGTCHNTHGGYNCVCVNGWTGEDCS) is the EGF-like 8; calcium-binding domain. O-linked (Fuc...) threonine glycosylation is present at Thr-311. In terms of domain architecture, EGF-like 9; calcium-binding spans 335-371 (NIDDCASAACFHGATCHDRVASFYCECPHGRTGLLCH). A glycan (O-linked (Glc...) serine) is linked at Ser-341. O-linked (Fuc...) threonine glycosylation is present at Thr-349. An EGF-like 10 domain is found at 372–410 (LNDACISNPCNEGSNCDTNPVNGKAICTCPSGYTGPACS). A glycan (O-linked (Glc...) serine) is linked at Ser-378. An EGF-like 11; calcium-binding domain is found at 412–450 (DVDECSLGANPCEHAGKCINTLGSFECQCLQGYTGPRCE). Positions 420–421 (AN) are interaction with DLL4. Thr-432 and Ser-435 together coordinate Ca(2+). Residue Ser-435 is glycosylated (O-linked (Glc...) serine). The interval 448–452 (RCEID) is interaction with DLL4. Residues Asp-452, Val-453, and Glu-455 each contribute to the Ca(2+) site. Residues 452 to 488 (DVNECVSNPCQNDATCLDQIGEFQCICMPGYEGVHCE) enclose the EGF-like 12; calcium-binding domain. 3 cysteine pairs are disulfide-bonded: Cys-456–Cys-467, Cys-461–Cys-476, and Cys-478–Cys-487. O-linked (Glc...) serine glycosylation occurs at Ser-458. Thr-466 is a glycosylation site (O-linked (Fuc...) threonine). Ca(2+)-binding residues include Asp-469 and Gln-470. Ca(2+)-binding residues include Asn-490, Thr-491, and Glu-493. In terms of domain architecture, EGF-like 13; calcium-binding spans 490–526 (NTDECASSPCLHNGRCLDKINEFQCECPTGFTGHLCQ). Intrachain disulfides connect Cys-494–Cys-505, Cys-499–Cys-514, Cys-516–Cys-525, Cys-532–Cys-543, Cys-537–Cys-552, Cys-554–Cys-563, Cys-570–Cys-580, Cys-575–Cys-589, Cys-591–Cys-600, Cys-607–Cys-618, Cys-612–Cys-627, Cys-629–Cys-638, Cys-645–Cys-655, Cys-650–Cys-664, Cys-666–Cys-675, Cys-682–Cys-693, Cys-687–Cys-702, Cys-704–Cys-713, Cys-720–Cys-730, Cys-725–Cys-739, Cys-741–Cys-750, Cys-757–Cys-768, Cys-762–Cys-777, Cys-779–Cys-788, Cys-795–Cys-806, Cys-800–Cys-815, Cys-817–Cys-826, Cys-833–Cys-844, Cys-838–Cys-855, Cys-857–Cys-866, Cys-873–Cys-884, Cys-878–Cys-893, Cys-895–Cys-904, Cys-911–Cys-922, Cys-916–Cys-931, Cys-933–Cys-942, Cys-949–Cys-960, Cys-954–Cys-969, Cys-971–Cys-980, Cys-987–Cys-998, Cys-992–Cys-1007, Cys-1009–Cys-1018, Cys-1025–Cys-1036, Cys-1030–Cys-1045, Cys-1047–Cys-1056, Cys-1063–Cys-1074, Cys-1068–Cys-1083, Cys-1085–Cys-1094, Cys-1101–Cys-1122, Cys-1116–Cys-1131, Cys-1133–Cys-1142, Cys-1149–Cys-1160, Cys-1154–Cys-1169, Cys-1171–Cys-1180, Cys-1187–Cys-1198, Cys-1192–Cys-1207, Cys-1209–Cys-1218, Cys-1238–Cys-1253, Cys-1255–Cys-1264, Cys-1271–Cys-1284, Cys-1276–Cys-1293, Cys-1295–Cys-1304, Cys-1311–Cys-1322, Cys-1316–Cys-1334, Cys-1336–Cys-1345, Cys-1352–Cys-1363, Cys-1357–Cys-1372, Cys-1374–Cys-1383, Cys-1391–Cys-1403, Cys-1397–Cys-1414, Cys-1416–Cys-1425, Cys-1449–Cys-1472, Cys-1454–Cys-1467, and Cys-1463–Cys-1479. Ser-496 carries an O-linked (Glc...) serine glycan. Asp-507 and Lys-508 together coordinate Ca(2+). The EGF-like 14; calcium-binding domain occupies 528–564 (DVDECASTPCKNGAKCLDGPNTYTCVCTEGYTGTHCE). O-linked (Glc...) serine glycosylation is present at Ser-534. The 36-residue stretch at 566-601 (DIDECDPDPCHYGSCKDGVATFTCLCRPGYTGHHCE) folds into the EGF-like 15; calcium-binding domain. The EGF-like 16; calcium-binding domain occupies 603–639 (NINECSSQPCRHGGTCQDRDNAYLCFCLKGTTGPNCE). Residue Ser-609 is glycosylated (O-linked (Glc...) serine). An O-linked (Fuc...) threonine glycan is attached at Thr-617. The 36-residue stretch at 641-676 (NLDDCASSPCDSGTCLDKIDGYECACEPGYTGSMCN) folds into the EGF-like 17; calcium-binding domain. An O-linked (Glc...) serine glycan is attached at Ser-647. In terms of domain architecture, EGF-like 18; calcium-binding spans 678-714 (NIDECAGNPCHNGGTCEDGINGFTCRCPEGYHDPTCL). An O-linked (Fuc...) threonine glycan is attached at Thr-692. The EGF-like 19; calcium-binding domain maps to 716 to 751 (EVNECNSNPCVHGACRDSLNGYKCDCDPGWSGTNCD). Ser-722 is a glycosylation site (O-linked (Glc...) serine). Residues 753 to 789 (NNNECESNPCVNGGTCKDMTSGYVCTCREGFSGPNCQ) form the EGF-like 20 domain. Ser-759 carries an O-linked (Glc...) serine glycan. The O-linked (Fuc...) threonine glycan is linked to Thr-767. A glycan (O-linked (GlcNAc) serine) is linked at Ser-784. The region spanning 791–827 (NINECASNPCLNQGTCIDDVAGYKCNCLLPYTGATCE) is the EGF-like 21; calcium-binding domain. Ser-797 carries an O-linked (Glc...) serine glycan. The O-linked (Fuc...) threonine glycan is linked to Thr-805. An EGF-like 22 domain is found at 829–867 (VLAPCAPSPCRNGGECRQSEDYESFSCVCPTGWQGQTCE). Residues 869–905 (DINECVLSPCRHGASCQNTHGGYRCHCQAGYSGRNCE) enclose the EGF-like 23; calcium-binding domain. Residues 907–943 (DIDDCRPNPCHNGGSCTDGINTAFCDCLPGFRGTFCE) enclose the EGF-like 24 domain. A glycan (O-linked (Fuc) serine) is linked at Ser-921. The 37-residue stretch at 945–981 (DINECASDPCRNGANCTDCVDSYTCTCPAGFSGIHCE) folds into the EGF-like 25; calcium-binding domain. An O-linked (Glc...) serine glycan is attached at Ser-951. A glycan (N-linked (GlcNAc...) asparagine) is linked at Asn-959. 5 EGF-like domains span residues 983-1019 (NTPD…SYCQ), 1021-1057 (DVNE…PNCQ), 1059-1095 (LVHW…LYCD), 1097-1143 (PSVS…SYCE), and 1145-1181 (LVDE…VNCS). Thr-997 is a glycosylation site (O-linked (Fuc...) threonine). The O-linked (Glc...) serine glycan is linked to Ser-1027. The O-linked (Fuc...) threonine glycan is linked to Thr-1035. Ser-1065 is a glycosylation site (O-linked (Glc...) serine). An O-linked (Fuc...) threonine glycan is attached at Thr-1159. The N-linked (GlcNAc...) asparagine glycan is linked to Asn-1179. Positions 1183–1219 (EIDECLSHPCQNGGTCLDLPNTYKCSCPRGTQGVHCE) constitute an EGF-like 31; calcium-binding domain. An O-linked (Glc...) serine glycan is attached at Ser-1189. Thr-1197 is a glycosylation site (O-linked (Fuc...) threonine). The EGF-like 32; calcium-binding domain occupies 1221–1265 (NVDDCNPPVDPVSRSPKCFNNGTCVDQVGGYSCTCPPGFVGERCE). Asn-1241 is a glycosylation site (N-linked (GlcNAc...) asparagine). EGF-like domains lie at 1267 to 1305 (DVNE…RRCE), 1307 to 1346 (VING…ATCE), 1348 to 1384 (DART…PECQ), and 1387 to 1426 (ASSP…LLCH). Residue Ser-1273 is glycosylated (O-linked (Glc...) serine). O-linked (Fuc...) threonine glycosylation occurs at Thr-1362. Thr-1379 carries an O-linked (GlcNAc...) threonine glycan. Thr-1402 is a glycosylation site (O-linked (Fuc...) threonine; alternate). A glycan (O-linked (GalNAc...) threonine; alternate) is linked at Thr-1402. 3 LNR repeats span residues 1449–1489 (CELP…PWKN), 1490–1531 (CTQS…CNPL), and 1532–1571 (YDQY…RLAA). Ca(2+) contacts are provided by Asp-1457, Asn-1460, Asp-1475, and Asp-1478. A glycan (N-linked (GlcNAc...) asparagine) is linked at Asn-1489. 5 cysteine pairs are disulfide-bonded: Cys-1490-Cys-1514, Cys-1496-Cys-1509, Cys-1505-Cys-1521, Cys-1536-Cys-1549, and Cys-1545-Cys-1561. An N-linked (GlcNAc...) asparagine glycan is attached at Asn-1587. An O-linked (GalNAc...) threonine glycan is attached at Thr-1725. The segment at 1728-1760 (PPPPAQLHFMYVAAAAFVLLFFVGCGVLLSRKR) is interaction with PSEN1. The chain crosses the membrane as a helical span at residues 1736–1756 (FMYVAAAAFVLLFFVGCGVLL). The Cytoplasmic segment spans residues 1757–2555 (SRKRRRQHGQ…QIARIPEAFK (799 aa)). Lys-1759 is covalently cross-linked (Glycyl lysine isopeptide (Lys-Gly) (interchain with G-Cter in ubiquitin)). The tract at residues 1780-1808 (KKKRREPLGEDSVGLKPLKNASDGALMDD) is disordered. At Thr-1861 the chain carries Phosphothreonine. ANK repeat units lie at residues 1927 to 1956 (TGET…DANI), 1960 to 1990 (MGRT…DLDA), 1994 to 2023 (DGTT…DVNA), 2027 to 2056 (LGKS…NKDM), 2060 to 2089 (REET…NRDI), and 2095 to 2122 (RLPR…VRSP). The tract at residues 1947–1955 (LLEASADAN) is HIF1AN-binding. Residue Asn-1955 is modified to (3S)-3-hydroxyasparagine; by HIF1AN; partial. Residues 2014 to 2022 (LINSHADVN) form an HIF1AN-binding region. At Asn-2022 the chain carries (3S)-3-hydroxyasparagine; by HIF1AN. Disordered stretches follow at residues 2151-2194 (PGVQ…LDSS), 2379-2447 (LVQT…QPLG), and 2483-2555 (TPPS…EAFK). A compositionally biased stretch (low complexity) spans 2379 to 2408 (LVQTQQVQPQNLQMQQQNLQPANIQQQQSL). The span at 2483-2502 (TPPSQHSYSSPVDNTPSHQL) shows a compositional bias: polar residues. Residues 2512-2527 (PSPESPDQWSSSSPHS) are compositionally biased toward low complexity. Over residues 2528-2547 (NVSDWSEGVSSPPTSMQSQI) the composition is skewed to polar residues.

The protein belongs to the NOTCH family. As to quaternary structure, heterodimer of a C-terminal fragment N(TM) and an N-terminal fragment N(EC) which are probably linked by disulfide bonds. Interacts with DNER, DTX1, DTX2 and RBPJ/RBPSUH. Also interacts with MAML1, MAML2 and MAML3 which act as transcriptional coactivators for NOTCH1. The NOTCH1 intracellular domain interacts with SNW1; the interaction involves multimerized NOTCH1 NICD and is implicated in a formation of an intermediate preactivation complex which associates with DNA-bound CBF-1/RBPJ. The activated membrane-bound form interacts with AAK1 which promotes NOTCH1 stabilization. Forms a trimeric complex with FBXW7 and SGK1. Interacts with HIF1AN. HIF1AN negatively regulates the function of notch intracellular domain (NICD), accelerating myogenic differentiation. Interacts (via NICD) with SNAI1 (via zinc fingers); the interaction induces SNAI1 degradation via MDM2-mediated ubiquitination and inhibits SNAI1-induced cell invasion. Interacts (via NICD) with MDM2A. Interacts (via NICD) with BCL6; the interaction decreases MAML1 recruitment by NOTCH1 NICD on target genes DNA and inhibits NOTCH1 transactivation activity. Interacts with THBS4. Interacts (via the EGF-like repeat region) with CCN3 (via CTCK domain). Interacts (via EGF-like domains) with DLL4 (via N-terminal DSL and MNNL domains). Interacts with ZMIZ1. Interacts (via NICD domain) with MEGF10 (via the cytoplasmic domain). Interacts with DLL1 and JAG1. Interacts (via NICD domain) with PRAG1. Forms a complex with PRAG1, N1ICD and MAML1, in a MAML1-dependent manner. Interacts (via transmembrane region) with PSEN1; the interaction is direct. Interacts with ZFP64. Post-translationally, synthesized in the endoplasmic reticulum as an inactive form which is proteolytically cleaved by a furin-like convertase in the trans-Golgi network before it reaches the plasma membrane to yield an active, ligand-accessible form. Cleavage results in a C-terminal fragment N(TM) and a N-terminal fragment N(EC). Following ligand binding, it is cleaved by ADAM17 to yield a membrane-associated intermediate fragment called notch extracellular truncation (NEXT). Following endocytosis, this fragment is then cleaved by one of the catalytic subunits of gamma-secretase (PSEN1 or PSEN2), to release a Notch-derived peptide containing the intracellular domain (NICD) from the membrane. Phosphorylated. In terms of processing, O-glycosylated on the EGF-like domains. O-glucosylated at Ser-435 by KDELC1 and KDELC2. Contains both O-linked fucose and O-linked glucose in the EGF-like domains 11, 12 and 13, which are interacting with the residues on DLL4. O-linked glycosylation by GALNT11 is involved in determination of left/right symmetry: glycosylation promotes activation of NOTCH1, possibly by promoting cleavage by ADAM17, modulating the balance between motile and immotile (sensory) cilia at the left-right organiser (LRO). MFNG-, RFNG- and LFNG-mediated modification of O-fucose residues at specific EGF-like domains results in inhibition of its activation by JAG1 and enhancement of its activation by DLL1 via an increased binding to DLL1. Post-translationally, ubiquitinated. Undergoes 'Lys-29'-linked polyubiquitination by ITCH; promotes the lysosomal degradation of non-activated internalized NOTCH1. Deubiquitination by USP12 is required for transport of internalized non-activated receptor from late endosomes to lysosomes for degradation. Monoubiquitination at Lys-1759 is required for activation by gamma-secretase cleavage, it promotes interaction with AAK1, which stabilizes it. Deubiquitination by EIF3F is necessary for nuclear import of activated Notch. Hydroxylated at Asn-1955 by HIF1AN. Hydroxylated at Asn-2022 by HIF1AN. Hydroxylation reduces affinity for HI1AN and may thus indirectly modulate negative regulation of NICD. In fetal tissues most abundant in spleen, brain stem and lung. Also present in most adult tissues where it is found mainly in lymphoid tissues.

It is found in the cell membrane. The protein resides in the late endosome membrane. It localises to the nucleus. Its function is as follows. Functions as a receptor for membrane-bound ligands Jagged-1 (JAG1), Jagged-2 (JAG2) and Delta-1 (DLL1) to regulate cell-fate determination. Upon ligand activation through the released notch intracellular domain (NICD) it forms a transcriptional activator complex with RBPJ/RBPSUH and activates genes of the enhancer of split locus. Affects the implementation of differentiation, proliferation and apoptotic programs. Involved in angiogenesis; negatively regulates endothelial cell proliferation and migration and angiogenic sprouting. Involved in the maturation of both CD4(+) and CD8(+) cells in the thymus. Important for follicular differentiation and possibly cell fate selection within the follicle. During cerebellar development, functions as a receptor for neuronal DNER and is involved in the differentiation of Bergmann glia. Represses neuronal and myogenic differentiation. May play an essential role in postimplantation development, probably in some aspect of cell specification and/or differentiation. May be involved in mesoderm development, somite formation and neurogenesis. May enhance HIF1A function by sequestering HIF1AN away from HIF1A. Required for the THBS4 function in regulating protective astrogenesis from the subventricular zone (SVZ) niche after injury. Involved in determination of left/right symmetry by modulating the balance between motile and immotile (sensory) cilia at the left-right organiser (LRO). The sequence is that of Neurogenic locus notch homolog protein 1 (NOTCH1) from Homo sapiens (Human).